A 410-amino-acid chain; its full sequence is Argininosuccinate synthase (410 aa).

Residues 13–21 and A40 contribute to the ATP site; that span reads AYSGGLDTS. L-citrulline contacts are provided by Y91 and S96. G121 is a binding site for ATP. L-aspartate is bound by residues T123, N127, and D128. L-citrulline is bound at residue N127. 5 residues coordinate L-citrulline: R131, S182, S191, E267, and Y279.

Belongs to the argininosuccinate synthase family. Type 1 subfamily. Homotetramer.

The protein resides in the cytoplasm. It carries out the reaction L-citrulline + L-aspartate + ATP = 2-(N(omega)-L-arginino)succinate + AMP + diphosphate + H(+). The protein operates within amino-acid biosynthesis; L-arginine biosynthesis; L-arginine from L-ornithine and carbamoyl phosphate: step 2/3. The polypeptide is Argininosuccinate synthase (Gluconobacter oxydans (strain 621H) (Gluconobacter suboxydans)).